The chain runs to 223 residues: Cytidylate kinase (223 aa).

12-20 contacts ATP; the sequence is GPSGVGKGT.

This sequence belongs to the cytidylate kinase family. Type 1 subfamily.

The protein localises to the cytoplasm. It catalyses the reaction CMP + ATP = CDP + ADP. The catalysed reaction is dCMP + ATP = dCDP + ADP. This chain is Cytidylate kinase, found in Xylella fastidiosa (strain M23).